The chain runs to 78 residues: Large ribosomal subunit protein bL28 (78 aa).

The protein belongs to the bacterial ribosomal protein bL28 family.

The sequence is that of Large ribosomal subunit protein bL28 from Clavibacter michiganensis subsp. michiganensis (strain NCPPB 382).